Reading from the N-terminus, the 225-residue chain is Heptaprenylglyceryl phosphate synthase (225 aa).

Position 6 (Lys-6) interacts with sn-glycerol 1-phosphate. Asp-8 and Thr-34 together coordinate Mg(2+). Sn-glycerol 1-phosphate is bound by residues 153–158 (YVEYSG), Gly-183, and 203–204 (GN).

It belongs to the GGGP/HepGP synthase family. Group I subfamily. Homodimer. Mg(2+) serves as cofactor.

It carries out the reaction sn-glycerol 1-phosphate + all-trans-heptaprenyl diphosphate = 3-heptaprenyl-sn-glycero-1-phosphate + diphosphate. It participates in membrane lipid metabolism; glycerophospholipid metabolism. In terms of biological role, prenyltransferase that catalyzes in vivo the transfer of the heptaprenyl moiety of heptaprenyl pyrophosphate (HepPP; 35 carbon atoms) to the C3 hydroxyl of sn-glycerol-1-phosphate (G1P), producing heptaprenylglyceryl phosphate (HepGP). This reaction is an ether-bond-formation step in the biosynthesis of archaea-type G1P-based membrane lipids found in Bacillales. In Listeria monocytogenes serotype 4a (strain HCC23), this protein is Heptaprenylglyceryl phosphate synthase.